The primary structure comprises 310 residues: Porphobilinogen deaminase (310 aa).

Cys-242 carries the S-(dipyrrolylmethanemethyl)cysteine modification.

The protein belongs to the HMBS family. Monomer. It depends on dipyrromethane as a cofactor.

It carries out the reaction 4 porphobilinogen + H2O = hydroxymethylbilane + 4 NH4(+). Its pathway is porphyrin-containing compound metabolism; protoporphyrin-IX biosynthesis; coproporphyrinogen-III from 5-aminolevulinate: step 2/4. Functionally, tetrapolymerization of the monopyrrole PBG into the hydroxymethylbilane pre-uroporphyrinogen in several discrete steps. The protein is Porphobilinogen deaminase of Shewanella halifaxensis (strain HAW-EB4).